Consider the following 412-residue polypeptide: FAD-dependent monooxygenase nscC (412 aa).

The signal sequence occupies residues 1–21 (MGKPQETILIIGAGIAGLTAS). Residues E35 and A46 each contribute to the FAD site. N-linked (GlcNAc...) asparagine glycans are attached at residues N68 and N92. FAD is bound at residue R119. N-linked (GlcNAc...) asparagine glycosylation is found at N170, N231, and N251. The FAD site is built by D326 and G339.

It belongs to the paxM FAD-dependent monooxygenase family. The cofactor is FAD.

It participates in secondary metabolite biosynthesis. Functionally, FAD-dependent monooxygenase; part of the gene cluster that mediates the biosynthesis of neosartoricin B, a prenylated anthracenone that probably exhibits T-cell antiproliferative activity, suggestive of a physiological role as an immunosuppressive agent. The non-reducing polyketide synthase nscA probably synthesizes and cyclizes the decaketide backbone. The hydrolase nscB then mediates the product release through hydrolysis followed by spontaneous decarboxylation. The prenyltransferase nscD catalyzes the addition of the dimethylallyl group to the aromatic C5. The FAD-dependent monooxygenase nscC is then responsible for the stereospecific hydroxylation at C2. Neosartoricin B can be converted into two additional compounds neosartoricins C and D. Neosartoricin C is a spirocyclic compound that is cyclized through the attack of C3 hydroxyl on C14, followed by dehydration. On the other hand, neosartoricin D is a further cyclized compound in which attack of C2 on C14 in neosartoricin C results in the formation of the acetal-containing dioxabicyclo-octanone ring. Both of these compounds are novel and possibly represent related metabolites of the gene cluster. This chain is FAD-dependent monooxygenase nscC, found in Trichophyton rubrum (strain ATCC MYA-4607 / CBS 118892) (Athlete's foot fungus).